Reading from the N-terminus, the 95-residue chain is Small ribosomal subunit protein uS17 (95 aa).

This sequence belongs to the universal ribosomal protein uS17 family. In terms of assembly, part of the 30S ribosomal subunit.

In terms of biological role, one of the primary rRNA binding proteins, it binds specifically to the 5'-end of 16S ribosomal RNA. The sequence is that of Small ribosomal subunit protein uS17 from Mesomycoplasma hyopneumoniae (strain 7448) (Mycoplasma hyopneumoniae).